A 74-amino-acid polypeptide reads, in one-letter code: Antimicrobial peptide 2 (74 aa).

A signal peptide spans 1-22 (MEIKYLLTVFLVLLIVSDHCQA). Lysine 40 is modified (lysine amide). Residues 46–74 (DLDGQIDRSRNFRKRDAELEELLSKLPIY) constitute a propeptide that is removed on maturation.

As to expression, expressed by the venom gland.

The protein localises to the secreted. Its subcellular location is the target cell membrane. Has antibacterial activity against the Gram-positive bacteria S.aureus (MIC=48 uM), the Gram-negative bacteria E.coli (MIC=120 uM), and the yeast C.albicans (MIC=64 uM). Causes hemolysis on horse erythrocytes. The polypeptide is Antimicrobial peptide 2 (Androctonus amoreuxi (African fattail scorpion)).